A 493-amino-acid polypeptide reads, in one-letter code: MGKPTGFMEIKREKPAERDPLTRLKDWKEYSAPFSEEASKRQGARCMDCGTPFCQIGADINGFTSGCPIYNLIPEWNDLVYRGRWKEALERLLKTNNFPEFTGRVCPAPCEGSCTLAISDPAVSIKNIERTIIDKGFENGWIQPRIPKKRTGKKVAIVGSGPAGLASADQLNQAGHSVTVFERADRAGGLLTYGIPNMKLEKGIVERRIKLLTQEGIDFVTNTEIGVDITADELKEQFDAVILCTGAQKQRDLLIEGRDSKGVHYAMDYLTLATKSYLDSNFKDKQFIDAKGKDVIVIGGGDTGADCVATALRQKAKSVHQFGKHPKLPPARTNDNMWPEQPHVFTLEYAYEEAEAKFGRDPREYSIQTTKMVADKNGKLKELHTIQMEKVKNEHGKYEFRELPGTEKVWPAQLVFIAIGFEGTEQPLLKQFGVNSVNNKISAAYGDYQTNIDGVFAAGDARRGQSLIVWAINEGREVAREVDRYLMGSSVLP.

299–313 (GGGDTGADCVATALR) is an NADP(+) binding site.

This sequence belongs to the glutamate synthase family. In terms of assembly, aggregate of 4 catalytic active heterodimers, consisting of a large and a small subunit.

It carries out the reaction 2 L-glutamate + NADP(+) = L-glutamine + 2-oxoglutarate + NADPH + H(+). It participates in amino-acid biosynthesis; L-glutamate biosynthesis via GLT pathway; L-glutamate from 2-oxoglutarate and L-glutamine (NADP(+) route): step 1/1. Its pathway is energy metabolism; nitrogen metabolism. This is Glutamate synthase [NADPH] small chain (gltB) from Bacillus subtilis (strain 168).